Consider the following 583-residue polypeptide: Isocitrate dehydrogenase kinase/phosphatase (583 aa).

Residues 315-321 (APGIRGM) and Lys-336 contribute to the ATP site. The active site involves Asp-371.

Belongs to the AceK family.

It is found in the cytoplasm. It carries out the reaction L-seryl-[isocitrate dehydrogenase] + ATP = O-phospho-L-seryl-[isocitrate dehydrogenase] + ADP + H(+). Its function is as follows. Bifunctional enzyme which can phosphorylate or dephosphorylate isocitrate dehydrogenase (IDH) on a specific serine residue. This is a regulatory mechanism which enables bacteria to bypass the Krebs cycle via the glyoxylate shunt in response to the source of carbon. When bacteria are grown on glucose, IDH is fully active and unphosphorylated, but when grown on acetate or ethanol, the activity of IDH declines drastically concomitant with its phosphorylation. This is Isocitrate dehydrogenase kinase/phosphatase from Salmonella paratyphi C (strain RKS4594).